The primary structure comprises 130 residues: Ribosome-binding factor A (130 aa).

This sequence belongs to the RbfA family. In terms of assembly, monomer. Binds 30S ribosomal subunits, but not 50S ribosomal subunits or 70S ribosomes.

Its subcellular location is the cytoplasm. Functionally, one of several proteins that assist in the late maturation steps of the functional core of the 30S ribosomal subunit. Associates with free 30S ribosomal subunits (but not with 30S subunits that are part of 70S ribosomes or polysomes). Required for efficient processing of 16S rRNA. May interact with the 5'-terminal helix region of 16S rRNA. The polypeptide is Ribosome-binding factor A (Prochlorococcus marinus (strain SARG / CCMP1375 / SS120)).